Consider the following 112-residue polypeptide: Ribosome-binding factor A (112 aa).

The protein belongs to the RbfA family. Monomer. Binds 30S ribosomal subunits, but not 50S ribosomal subunits or 70S ribosomes.

The protein localises to the cytoplasm. In terms of biological role, one of several proteins that assist in the late maturation steps of the functional core of the 30S ribosomal subunit. Associates with free 30S ribosomal subunits (but not with 30S subunits that are part of 70S ribosomes or polysomes). Required for efficient processing of 16S rRNA. May interact with the 5'-terminal helix region of 16S rRNA. In Ruthia magnifica subsp. Calyptogena magnifica, this protein is Ribosome-binding factor A.